The sequence spans 91 residues: DNA-directed RNA polymerase subunit omega (91 aa).

Residues 66 to 91 form a disordered region; it reads QMPPPLPNFPGAANREATGAEDAAGE.

The protein belongs to the RNA polymerase subunit omega family. As to quaternary structure, the RNAP catalytic core consists of 2 alpha, 1 beta, 1 beta' and 1 omega subunit. When a sigma factor is associated with the core the holoenzyme is formed, which can initiate transcription.

The catalysed reaction is RNA(n) + a ribonucleoside 5'-triphosphate = RNA(n+1) + diphosphate. Its function is as follows. Promotes RNA polymerase assembly. Latches the N- and C-terminal regions of the beta' subunit thereby facilitating its interaction with the beta and alpha subunits. This Acidithiobacillus ferrooxidans (strain ATCC 23270 / DSM 14882 / CIP 104768 / NCIMB 8455) (Ferrobacillus ferrooxidans (strain ATCC 23270)) protein is DNA-directed RNA polymerase subunit omega.